A 973-amino-acid chain; its full sequence is Isoleucine--tRNA ligase, mitochondrial (973 aa).

Positions 87–97 (PFANGRLHIGH) match the 'HIGH' region motif. Residues 625–629 (KQSKS) carry the 'KMSKS' region motif. K628 is an ATP binding site.

It belongs to the class-I aminoacyl-tRNA synthetase family.

It is found in the cytoplasm. Its subcellular location is the mitochondrion matrix. The enzyme catalyses tRNA(Ile) + L-isoleucine + ATP = L-isoleucyl-tRNA(Ile) + AMP + diphosphate. The chain is Isoleucine--tRNA ligase, mitochondrial (ism1) from Schizosaccharomyces pombe (strain 972 / ATCC 24843) (Fission yeast).